Here is an 893-residue protein sequence, read N- to C-terminus: Serine/threonine-protein kinase PLK4 (893 aa).

Residues 12 to 265 (FRVGNLLGKG…LSSVLDHPFM (254 aa)) form the Protein kinase domain. ATP-binding positions include 18–26 (LGKGSFAGV) and K41. An N6-acetyllysine mark is found at K45 and K46. D136 acts as the Proton acceptor in catalysis. A compositionally biased stretch (polar residues) spans 349 to 358 (NQEQETSNSG). A disordered region spans residues 349-393 (NQEQETSNSGRGRVIQEAEERPHSRYLRRAHSSDRSETSHGQSRV). Over residues 362–371 (VIQEAEERPH) the composition is skewed to basic and acidic residues. 2 positions are modified to phosphoserine: S403 and S588. The region spanning 509-622 (TLRSITSPLT…SRFVQLVRSK (114 aa)) is the Cryptic POLO box 1 (CPB1) domain. Residues 623-736 (SPKITYFTRY…GRRPSSTSSP (114 aa)) enclose the Cryptic POLO box 2 (CPB2) domain. The disordered stretch occupies residues 730–749 (PSSTSSPKALTPPPPVDPNY). In terms of domain architecture, POLO box spans 809 to 887 (QLLKSVFVKN…LSSILLMFSN (79 aa)).

This sequence belongs to the protein kinase superfamily. Ser/Thr protein kinase family. CDC5/Polo subfamily. As to quaternary structure, homodimer. Interacts with CEP152 (via N-terminus). Interacts with CEP78; this interaction may be important for proper PLK4 localization to the centriole and PLK4-induced overduplication of centrioles. Interacts with CEP131. Interacts simultaneously with TENT5C and CEP192. Interacts with TENT5C; this interaction leads to the TENT5C recruitment in the centrosome. Interacts with CEP85; this interaction may be important in cell migration and centriole assembly. In terms of processing, ubiquitinated; leading to its degradation by the proteasome. Post-translationally, tyrosine-phosphorylated by TEC. Acetylation by KAT2A and KAT2B impairs kinase activity by shifting the kinase to an inactive conformation.

Its subcellular location is the cytoplasm. It is found in the cytoskeleton. The protein resides in the microtubule organizing center. The protein localises to the centrosome. It localises to the centriole. Its subcellular location is the nucleus. It is found in the nucleolus. The protein resides in the cleavage furrow. It catalyses the reaction L-seryl-[protein] + ATP = O-phospho-L-seryl-[protein] + ADP + H(+). It carries out the reaction L-threonyl-[protein] + ATP = O-phospho-L-threonyl-[protein] + ADP + H(+). Serine/threonine-protein kinase that plays a central role in centriole duplication. Able to trigger procentriole formation on the surface of the parental centriole cylinder, leading to the recruitment of centriole biogenesis proteins such as SASS6, CPAP, CCP110, CEP135 and gamma-tubulin. When overexpressed, it is able to induce centrosome amplification through the simultaneous generation of multiple procentrioles adjoining each parental centriole during S phase. Phosphorylates 'Ser-151' of FBXW5 during the G1/S transition, leading to inhibit FBXW5 ability to ubiquitinate SASS6. Its central role in centriole replication suggests a possible role in tumorigenesis, centrosome aberrations being frequently observed in tumors. Also involved in deuterosome-mediated centriole amplification in multiciliated that can generate more than 100 centrioles. Also involved in trophoblast differentiation by phosphorylating HAND1, leading to disrupt the interaction between HAND1 and MDFIC and activate HAND1. Phosphorylates CDC25C and CHEK2. Required for the recruitment of STIL to the centriole and for STIL-mediated centriole amplification. Phosphorylates CEP131 and PCM1 which is essential for proper organization and integrity of centriolar satellites. The sequence is that of Serine/threonine-protein kinase PLK4 from Bos taurus (Bovine).